The primary structure comprises 309 residues: Foldase protein PrsA 2 (309 aa).

The first 22 residues, 1 to 22 (MKQMNKLITGVVTLATVVTLSA), serve as a signal peptide directing secretion. Residue Cys-23 is the site of N-palmitoyl cysteine attachment. Cys-23 is lipidated: S-diacylglycerol cysteine. Residues 146–241 (TPTMTAEIMQ…RTYHIIKVTK (96 aa)) enclose the PpiC domain.

It belongs to the PrsA family.

It is found in the cell membrane. The catalysed reaction is [protein]-peptidylproline (omega=180) = [protein]-peptidylproline (omega=0). In terms of biological role, plays a major role in protein secretion by helping the post-translocational extracellular folding of several secreted proteins. This Streptococcus pyogenes serotype M6 (strain ATCC BAA-946 / MGAS10394) protein is Foldase protein PrsA 2.